Consider the following 82-residue polypeptide: Cytotoxin 10 (82 aa).

The first 22 residues, 1 to 22 (MKTLLLTLVVVVTIVCLDLGYT), serve as a signal peptide directing secretion. Intrachain disulfides connect cysteine 25–cysteine 43, cysteine 36–cysteine 60, cysteine 64–cysteine 75, and cysteine 76–cysteine 81.

This sequence belongs to the three-finger toxin family. Short-chain subfamily. Type IA cytotoxin sub-subfamily. As to quaternary structure, monomer in solution; Homodimer and oligomer in the presence of negatively charged lipids forming a pore with a size ranging between 20 and 30 Angstroms. As to expression, expressed by the venom gland.

It is found in the secreted. It localises to the target cell membrane. Shows cytolytic activity on many different cells by forming pore in lipid membranes. In vivo, increases heart rate or kills the animal by cardiac arrest. In addition, it binds to heparin with high affinity, interacts with Kv channel-interacting protein 1 (KCNIP1) in a calcium-independent manner, and binds to integrin alpha-V/beta-3 (ITGAV/ITGB3) with moderate affinity. The chain is Cytotoxin 10 from Naja atra (Chinese cobra).